The sequence spans 459 residues: N(6)-adenosine-methyltransferase non-catalytic subunit METTL14 (459 aa).

Positions 50–73 are disordered; that stretch reads TCRASYDTSAPNAKRKYPDEGEAD. Interaction with METTL3 regions lie at residues 135-136 and 237-238; these read RD and SG. The interval 245 to 254 is positively charged region required for RNA-binding; the sequence is RVCLRKWGYR. Interaction with METTL3 regions lie at residues 255 to 258 and 278 to 287; these read RCED and KAVFQRTKEH. The tract at residues 297–298 is positively charged region required for RNA-binding; that stretch reads RR. Positions 308-312 are interaction with METTL3; it reads NVDID. The disordered stretch occupies residues 392–459; sequence IERLRPKSPP…GTHRGGFPTR (68 aa). Over residues 409–423 the composition is skewed to gly residues; it reads GGGAPRGGGRGGTSA. Residues 425–443 are compositionally biased toward basic and acidic residues; the sequence is RGERGRERNRTNFRGERGG. The span at 444–453 shows a compositional bias: gly residues; that stretch reads FRGGRGGTHR.

Belongs to the MT-A70-like family. In terms of assembly, heterodimer; heterodimerizes with METTL3 to form an antiparallel heterodimer that constitutes an active methyltransferase. Component of the WMM complex, a N6-methyltransferase complex composed of a catalytic subcomplex, named MAC, and of an associated subcomplex, named MACOM. The MAC subcomplex is composed of METTL3 and METTL14.

It localises to the nucleus. Functionally, the METTL3-METTL14 heterodimer forms a N6-methyltransferase complex that methylates adenosine residues at the N(6) position of some mRNAs and regulates the circadian clock, differentiation of embryonic stem cells and cortical neurogenesis. In the heterodimer formed with METTL3, METTL14 constitutes the RNA-binding scaffold that recognizes the substrate rather than the catalytic core. N6-methyladenosine (m6A), which takes place at the 5'-[AG]GAC-3' consensus sites of some mRNAs, plays a role in mRNA stability and processing. The sequence is that of N(6)-adenosine-methyltransferase non-catalytic subunit METTL14 (METTL14) from Gallus gallus (Chicken).